The chain runs to 70 residues: Conotoxin Im23.4 (70 aa).

A signal peptide spans 1–22 (MIMRMTLTLFVLVVMTAASASG). A propeptide spanning residues 23-30 (DALTEAKR) is cleaved from the precursor. Intrachain disulfides connect Cys-34/Cys-41, Cys-45/Cys-53, and Cys-54/Cys-69.

It belongs to the conotoxin K superfamily. In terms of tissue distribution, expressed by the venom duct.

It is found in the secreted. In terms of biological role, probable neurotoxin. In Conus imperialis (Imperial cone), this protein is Conotoxin Im23.4.